A 53-amino-acid chain; its full sequence is ATP synthase protein 8 (53 aa).

The chain crosses the membrane as a helical span at residues 9–29; that stretch reads WITSMLMFWISVSILFSTLWW.

The protein belongs to the ATPase protein 8 family. As to quaternary structure, F-type ATPases have 2 components, CF(1) - the catalytic core - and CF(0) - the membrane proton channel.

The protein localises to the mitochondrion membrane. Mitochondrial membrane ATP synthase (F(1)F(0) ATP synthase or Complex V) produces ATP from ADP in the presence of a proton gradient across the membrane which is generated by electron transport complexes of the respiratory chain. F-type ATPases consist of two structural domains, F(1) - containing the extramembraneous catalytic core and F(0) - containing the membrane proton channel, linked together by a central stalk and a peripheral stalk. During catalysis, ATP synthesis in the catalytic domain of F(1) is coupled via a rotary mechanism of the central stalk subunits to proton translocation. Part of the complex F(0) domain. Minor subunit located with subunit a in the membrane. The chain is ATP synthase protein 8 (MT-ATP8) from Lumbricus terrestris (Common earthworm).